A 497-amino-acid polypeptide reads, in one-letter code: RNA polymerase sigma factor SigA (497 aa).

Disordered stretches follow at residues 1-20 (MSTDKKTLGEKPNSTKPELS) and 62-86 (KTLHENKESDVPKKRRGRKPKHAPL). Residues 63–73 (TLHENKESDVP) show a composition bias toward basic and acidic residues. A compositionally biased stretch (basic residues) spans 74–84 (KKRRGRKPKHA). Residues 250–320 (LVTSNLRLVV…TRAIADQART (71 aa)) form a sigma-70 factor domain-2 region. The Interaction with polymerase core subunit RpoC motif lies at 274–277 (DLIQ). A sigma-70 factor domain-3 region spans residues 329-410 (ETINRLAKAE…DTDAQTPDEF (82 aa)). The segment at 423 to 478 (LLNNNLSEQEELIVRMRIGMPPYNEPKTLDEVGQKILIPREKIRQIENKAIRKLRH) is sigma-70 factor domain-4. A DNA-binding region (H-T-H motif) is located at residues 451–470 (LDEVGQKILIPREKIRQIEN).

The protein belongs to the sigma-70 factor family. RpoD/SigA subfamily. As to quaternary structure, interacts transiently with the RNA polymerase catalytic core.

Its subcellular location is the cytoplasm. Sigma factors are initiation factors that promote the attachment of RNA polymerase to specific initiation sites and are then released. This sigma factor is the primary sigma factor during exponential growth. The chain is RNA polymerase sigma factor SigA from Mycoplasma genitalium (strain ATCC 33530 / DSM 19775 / NCTC 10195 / G37) (Mycoplasmoides genitalium).